The primary structure comprises 469 residues: Adenosylhomocysteinase (469 aa).

3 residues coordinate substrate: T63, D139, and E164. 165–167 (TTT) serves as a coordination point for NAD(+). Residues K194 and D198 each coordinate substrate. Residues N199, 228–233 (GYGDVG), E251, N300, 321–323 (IGH), and N375 each bind NAD(+).

This sequence belongs to the adenosylhomocysteinase family. The cofactor is NAD(+).

Its subcellular location is the cytoplasm. The catalysed reaction is S-adenosyl-L-homocysteine + H2O = L-homocysteine + adenosine. It functions in the pathway amino-acid biosynthesis; L-homocysteine biosynthesis; L-homocysteine from S-adenosyl-L-homocysteine: step 1/1. Its function is as follows. May play a key role in the regulation of the intracellular concentration of adenosylhomocysteine. In Pseudomonas putida (strain ATCC 700007 / DSM 6899 / JCM 31910 / BCRC 17059 / LMG 24140 / F1), this protein is Adenosylhomocysteinase.